Here is a 332-residue protein sequence, read N- to C-terminus: T-cell surface glycoprotein CD1c1 (332 aa).

The signal sequence occupies residues 1–17 (MLFLHFLFLDVVLGGSI). The Extracellular segment spans residues 18–300 (TENVVQENIS…IILYWGHGLS (283 aa)). N-linked (GlcNAc...) asparagine glycans are attached at residues asparagine 25, asparagine 38, asparagine 75, and asparagine 146. Cystine bridges form between cysteine 120–cysteine 184 and cysteine 224–cysteine 279. Positions 205–292 (PEVWLSSSPN…HSSLRDQDII (88 aa)) constitute an Ig-like domain. The chain crosses the membrane as a helical span at residues 301-321 (VILITFAVIVPLVLLIVLMLL). Residues 322–332 (YKKRCTYQGIQ) are Cytoplasmic-facing.

In terms of assembly, heterodimer with B2M (beta-2-microglobulin).

The protein resides in the cell membrane. The protein localises to the endosome membrane. Antigen-presenting protein that binds self and non-self lipid and glycolipid antigens and presents them to T-cell receptors on natural killer T-cells. The sequence is that of T-cell surface glycoprotein CD1c1 (CD1C1) from Cavia porcellus (Guinea pig).